The following is a 311-amino-acid chain: E3 ubiquitin-protein ligase RNF126 (311 aa).

4 residues coordinate Zn(2+): cysteine 13, cysteine 16, cysteine 29, and cysteine 32. A C4-type zinc finger spans residues 13–32; sequence CHSCTAEIIPRLPEYTCPRC. 2 disordered regions span residues 42–62 and 95–133; these read ETRN…NRPS and GTSG…RRAA. Positions 101–114 are enriched in basic and acidic residues; the sequence is EEPRDGESRREHQS. Positions 123–133 are enriched in basic residues; that stretch reads PRARLSTRRAA. The segment at 227-268 adopts an RING-type zinc-finger fold; sequence CPVCKEDYTVGESVRQLPCNHLFHNDCIIPWLEQHDTCPVCR. The disordered stretch occupies residues 274 to 311; sequence QNTATNPPGLTEMTFSSSSTSSSSSTSPTDENNAANNS. Low complexity predominate over residues 289 to 300; it reads SSSSTSSSSSTS. A compositionally biased stretch (polar residues) spans 301-311; it reads PTDENNAANNS.

The protein localises to the cytoplasm. Its subcellular location is the nucleus. The catalysed reaction is S-ubiquitinyl-[E2 ubiquitin-conjugating enzyme]-L-cysteine + [acceptor protein]-L-lysine = [E2 ubiquitin-conjugating enzyme]-L-cysteine + N(6)-ubiquitinyl-[acceptor protein]-L-lysine.. It functions in the pathway protein modification; protein ubiquitination. Its function is as follows. E3 ubiquitin-protein ligase that mediates ubiquitination oF target proteins. Depending on the associated E2 ligase, mediates 'Lys-27'-, 'Lys-29'-, 'Lys-48'- and/or 'Lys-63'-linked polyubiquitination of substrates. Part of a BAG6-dependent quality control process ensuring that proteins of the secretory pathway that are mislocalized to the cytosol are degraded by the proteasome. Probably acts by providing the ubiquitin ligase activity associated with the BAG6 complex and be responsible for ubiquitination of the hydrophobic mislocalized proteins and their targeting to the proteasome. The protein is E3 ubiquitin-protein ligase RNF126 of Xenopus tropicalis (Western clawed frog).